Consider the following 126-residue polypeptide: Small ribosomal subunit protein bS6 (126 aa).

Residues 99–126 form a disordered region; it reads PLPAPRVVPGTEAPEPAQAAETPEPEAS. Positions 107–120 are enriched in low complexity; sequence PGTEAPEPAQAAET.

It belongs to the bacterial ribosomal protein bS6 family.

Functionally, binds together with bS18 to 16S ribosomal RNA. The polypeptide is Small ribosomal subunit protein bS6 (Synechococcus sp. (strain CC9902)).